The sequence spans 712 residues: Polyribonucleotide nucleotidyltransferase (712 aa).

Mg(2+) is bound by residues Asp-487 and Asp-493. Residues 554-613 form the KH domain; the sequence is PKIITMTINPDKIRDVIGPSGKQINKIIEETGVKIDIEQDGTVFISSINQEMNDKAKKII. Positions 623–691 constitute an S1 motif domain; sequence GEIYEGKVKR…KQGRVNLSRK (69 aa).

Belongs to the polyribonucleotide nucleotidyltransferase family. It depends on Mg(2+) as a cofactor.

It is found in the cytoplasm. The enzyme catalyses RNA(n+1) + phosphate = RNA(n) + a ribonucleoside 5'-diphosphate. Involved in mRNA degradation. Catalyzes the phosphorolysis of single-stranded polyribonucleotides processively in the 3'- to 5'-direction. The polypeptide is Polyribonucleotide nucleotidyltransferase (Bacillus cereus (strain G9842)).